Reading from the N-terminus, the 135-residue chain is NADH-quinone oxidoreductase subunit K (135 aa).

The next 3 membrane-spanning stretches (helical) occupy residues 33-53, 63-83, and 95-115; these read VLGL…FAIG, FLFM…AFVV, and IMFI…LAIL.

This sequence belongs to the complex I subunit 4L family. As to quaternary structure, NDH-1 is composed of 14 different subunits. Subunits NuoA, H, J, K, L, M, N constitute the membrane sector of the complex.

It is found in the cell inner membrane. The catalysed reaction is a quinone + NADH + 5 H(+)(in) = a quinol + NAD(+) + 4 H(+)(out). Its function is as follows. NDH-1 shuttles electrons from NADH, via FMN and iron-sulfur (Fe-S) centers, to quinones in the respiratory chain. The immediate electron acceptor for the enzyme in this species is believed to be ubiquinone. Couples the redox reaction to proton translocation (for every two electrons transferred, four hydrogen ions are translocated across the cytoplasmic membrane), and thus conserves the redox energy in a proton gradient. This chain is NADH-quinone oxidoreductase subunit K, found in Psychrobacter cryohalolentis (strain ATCC BAA-1226 / DSM 17306 / VKM B-2378 / K5).